We begin with the raw amino-acid sequence, 353 residues long: N-acetyl-gamma-glutamyl-phosphate reductase (353 aa).

C157 is a catalytic residue.

The protein belongs to the NAGSA dehydrogenase family. Type 1 subfamily.

It localises to the cytoplasm. The catalysed reaction is N-acetyl-L-glutamate 5-semialdehyde + phosphate + NADP(+) = N-acetyl-L-glutamyl 5-phosphate + NADPH + H(+). The protein operates within amino-acid biosynthesis; L-arginine biosynthesis; N(2)-acetyl-L-ornithine from L-glutamate: step 3/4. Its function is as follows. Catalyzes the NADPH-dependent reduction of N-acetyl-5-glutamyl phosphate to yield N-acetyl-L-glutamate 5-semialdehyde. The chain is N-acetyl-gamma-glutamyl-phosphate reductase from Bordetella avium (strain 197N).